A 388-amino-acid chain; its full sequence is MVSPRGVCFLLFLLLGSVFGSVFMLGPLLPLMLLSPSRYRWITDRIVATWLTLPVALLELVLGVKVVVTGDGFIPGERSVIIMNHRTRLDWMFLWCCLLRYSYLRQEKICLKAALKSVPGFGWAMQVASFIFIQRRWEDDRTHMSNMLQYFCRIREPVQLLLFPEGTDLTENTRARSDEFAEKNGLQKYEYVLHPRTTGFTFIVDTLRGGDNLDAVHDITVAYPQNIPQTERHLLAGVFPREIHFHVQRFTVASVPAGAAGLQAWCQERWREKERRLQRFYETVPRRFDAPAVGVCVREPCCQSGQCVCVPRCKSEGRVRIILVASLLYWSVFITAACASLCLCPPAQFYFLFMVVFFLCQQRFTGGLELMELACHRYWSRRSADKQE.

Helical transmembrane passes span 9 to 29 (FLLF…GPLL) and 46 to 66 (IVAT…GVKV). The HXXXXD motif motif lies at 85–90 (HRTRLD). A run of 2 helical transmembrane segments spans residues 321 to 341 (IILV…CASL) and 342 to 362 (CLCP…LCQQ).

This sequence belongs to the 1-acyl-sn-glycerol-3-phosphate acyltransferase family.

It localises to the endoplasmic reticulum membrane. The catalysed reaction is a 1-acyl-sn-glycero-3-phosphate + an acyl-CoA = a 1,2-diacyl-sn-glycero-3-phosphate + CoA. The enzyme catalyses a 1-acyl-sn-glycero-3-phospho-(1D-myo-inositol) + an acyl-CoA = a 1,2-diacyl-sn-glycero-3-phospho-(1D-myo-inositol) + CoA. It carries out the reaction 1-acyl-sn-glycero-3-phospho-(1'-sn-glycerol) + an acyl-CoA = a 1,2-diacyl-sn-glycero-3-phospho-(1'-sn-glycerol) + CoA. It catalyses the reaction 1-hexadecanoyl-sn-glycero-3-phosphate + (9Z)-octadecenoyl-CoA = 1-hexadecanoyl-2-(9Z-octadecenoyl)-sn-glycero-3-phosphate + CoA. The catalysed reaction is 1-(9Z-octadecenoyl)-sn-glycero-3-phosphate + (9Z)-octadecenoyl-CoA = 1,2-di-(9Z-octadecenoyl)-sn-glycero-3-phosphate + CoA. The enzyme catalyses 1-(9Z,12Z)-octadecadienoyl-sn-glycero-3-phosphate + (9Z)-octadecenoyl-CoA = 1-(9Z,12Z)-octadecadienoyl-2-(9Z)-octadecenoyl-sn-glycero-3-phosphate + CoA. It carries out the reaction 1-(9Z,12Z,15Z)-octadecatrienoyl-sn-glycero-3-phosphate + (9Z)-octadecenoyl-CoA = 1-(9Z,12Z,15Z)-octadecatrienoyl-2-(9Z)-octadecenoyl-sn-glycero-3-phosphate + CoA. It catalyses the reaction 1-(9Z-octadecenoyl)-sn-glycero-3-phosphate + hexadecanoyl-CoA = 1-(9Z)-octadecenoyl-2-hexadecanoyl-sn-glycero-3-phosphate + CoA. The catalysed reaction is 1-(9Z-octadecenoyl)-sn-glycero-3-phosphate + octadecanoyl-CoA = 1-(9Z-octadecenoyl)-2-octadecanoyl-sn-glycero-3-phosphate + CoA. The enzyme catalyses 1-acyl-sn-glycero-3-phospho-(1'-sn-glycerol) + (9Z)-octadecenoyl-CoA = 1-acyl-2-(9Z-octadecenoyl)-sn-glycero-3-phospho-(1'-sn-glycerol) + CoA. It carries out the reaction a 1-acyl-sn-glycero-3-phospho-(1D-myo-inositol) + (9Z)-octadecenoyl-CoA = a 1-acyl-2-(9Z-octadecenoyl)-sn-glycero-3-phospho-(1D-myo-inositol) + CoA. It catalyses the reaction 1-hexadecanoyl-sn-glycero-3-phospho-(1D-myo-inositol) + hexadecanoyl-CoA = 1,2-dihexadecanoyl-sn-glycero-3-phospho-(1D-myo-inositol) + CoA. The catalysed reaction is 1-hexadecanoyl-sn-glycero-3-phospho-(1D-myo-inositol) + octadecanoyl-CoA = 1-hexadecanoyl-2-octadecanoyl-sn-glycero-3-phospho-(1D-myo-inositol) + CoA. The enzyme catalyses 1-hexadecanoyl-sn-glycero-3-phospho-(1D-myo-inositol) + (9Z)-octadecenoyl-CoA = 1-hexadecanoyl-2-(9Z-octadecenoyl)-sn-glycero-3-phospho-(1D-myo-inositol) + CoA. It carries out the reaction 1-hexadecanoyl-sn-glycero-3-phospho-(1D-myo-inositol) + (9Z,12Z)-octadecadienoyl-CoA = 1-hexadecanoyl-2-(9Z,12Z-octadecadienoyl)-sn-glycero-3-phospho-(1D-myo-inositol) + CoA. It catalyses the reaction 1-hexadecanoyl-sn-glycero-3-phospho-(1D-myo-inositol) + (5Z,8Z,11Z,14Z)-eicosatetraenoyl-CoA = 1-hexadecanoyl-2-(5Z,8Z,11Z,14Z-eicosatetraenoyl)-sn-glycero-3-phospho-D-myo-inositol + CoA. The catalysed reaction is 1-hexadecanoyl-sn-glycero-3-phospho-(1'-sn-glycerol) + hexadecanoyl-CoA = 1,2-dihexadecanoyl-sn-glycero-3-phospho-(1'-sn-glycerol) + CoA. The enzyme catalyses 1-hexadecanoyl-sn-glycero-3-phospho-(1'-sn-glycerol) + octadecanoyl-CoA = 1-hexadecanoyl-2-octadecanoyl-sn-glycero-3-phospho-(1'-sn-glycerol) + CoA. It carries out the reaction 1-hexadecanoyl-sn-glycero-3-phospho-(1'-sn-glycerol) + (9Z)-octadecenoyl-CoA = 1-hexadecanoyl-2-(9Z-octadecenoyl)-sn-glycero-3-phospho-(1'-sn-glycerol) + CoA. It catalyses the reaction 1-hexadecanoyl-sn-glycero-3-phospho-(1'-sn-glycerol) + (9Z,12Z)-octadecadienoyl-CoA = 1-hexadecanoyl-2-(9Z,12Z-octadecadienoyl)-sn-glycero-3-phospho-(1'-sn-glycerol) + CoA. The catalysed reaction is 1-tetradecanoyl-sn-glycero-3-phospho-(1'-sn-glycerol) + (9Z)-octadecenoyl-CoA = 1-tetradecanoyl-2-(9Z-octadecenoyl)-sn-glycero-3-phospho-(1'-sn-glycerol) + CoA. The enzyme catalyses 1-octadecanoyl-sn-glycero-3-phospho-(1'-sn-glycerol) + (9Z)-octadecenoyl-CoA = 1-octadecanoyl-2-(9Z-octadecenoyl)-sn-glycero-3-phospho-(1'-sn-glycerol) + CoA. It carries out the reaction 1-(9Z-octadecenoyl)-sn-glycero-3-phospho-(1'-sn-glycerol) + (9Z)-octadecenoyl-CoA = 1,2-di-(9Z-octadecenoyl)-sn-glycero-3-phospho-(1'-sn-glycerol) + CoA. It catalyses the reaction 1-hexadecanoyl-sn-glycero-3-phospho-(1D-myo-inositol) + dodecanoyl-CoA = 1-hexadecanoyl-2-dodecanoyl-sn-glycero-3-phospho-(1D-myo-inositol) + CoA. The catalysed reaction is 1',3'-bis-[1-acyl-sn-glycero-3-phospho]-glycerol + (9Z)-octadecenoyl-CoA = 1'-[1-acyl-2-(9Z)-octadecenoyl-sn-glycero-3-phospho],3'-[1-acyl,2-hydroxy-sn-glycero-3-phospho]-glycerol + CoA. The enzyme catalyses 1'-[1,2-diacyl-sn-glycero-3-phospho],3'-[1-acyl-sn-glycero-3-phospho]-glycerol + (9Z)-octadecenoyl-CoA = 1'-[1,2-diacyl-sn-glycero-3-phospho],3'-[1-acyl,2-(9Z)-octadecenoyl-sn-glycero-3-phospho]-glycerol + CoA. It carries out the reaction 1'-[1,2-diacyl-sn-glycero-3-phospho],3'-[1-acyl-sn-glycero-3-phospho]-glycerol + (9Z,12Z)-octadecadienoyl-CoA = 1'-[1,2-diacyl-sn-glycero-3-phospho],3'-[1-acyl,2-(9Z,12Z)-octadecadienoyl-sn-glycero-3-phospho]-glycerol + CoA. It catalyses the reaction 1'-[1,2-diacyl-sn-glycero-3-phospho],3'-[1-acyl-sn-glycero-3-phospho]-glycerol + dodecanoyl-CoA = 1'-[1,2-diacyl-sn-glycero-3-phospho],3'-[1-acyl,2-dodecanoyl-sn-glycero-3-phospho]-glycerol + CoA. The catalysed reaction is 1',3'-bis-[1-acyl-sn-glycero-3-phospho]-glycerol + dodecanoyl-CoA = 1'-[1-acyl-2-dodecanoyl-sn-glycero-3-phospho],3'-[1-acyl,2-hydroxy-sn-glycero-3-phospho]-glycerol + CoA. The enzyme catalyses a 1-acyl-sn-glycero-3-phosphate + (9Z)-octadecenoyl-CoA = a 1-acyl-2-(9Z-octadecenoyl)-sn-glycero-3-phosphate + CoA. It carries out the reaction 1',3'-bis-[1-acyl-sn-glycero-3-phospho]-glycerol + (9Z,12Z)-octadecadienoyl-CoA = 1'-[1-acyl-2-(9Z,12Z)-octadecadienoyl-sn-glycero-3-phospho],3'-[1-acyl,2-hydroxy-sn-glycero-3-phospho]-glycerol + CoA. It catalyses the reaction 1',3'-bis-[1-acyl-sn-glycero-3-phospho]-glycerol + hexadecanoyl-CoA = 1'-[1-acyl-2-hexadecanoyl-sn-glycero-3-phospho],3'-[1-acyl,2-hydroxy-sn-glycero-3-phospho]-glycerol + CoA. The catalysed reaction is 1',3'-bis-[1-acyl-sn-glycero-3-phospho]-glycerol + octadecanoyl-CoA = 1'-[1-acyl-2-octadecanoyl-sn-glycero-3-phospho],3'-[1-acyl,2-hydroxy-sn-glycero-3-phospho]-glycerol + CoA. The enzyme catalyses 1'-[1,2-diacyl-sn-glycero-3-phospho],3'-[1-acyl-sn-glycero-3-phospho]-glycerol + octanoyl-CoA = 1'-[1,2-diacyl-sn-glycero-3-phospho],3'-[1-acyl,2-octanoyl-sn-glycero-3-phospho]-glycerol + CoA. It carries out the reaction 1',3'-bis-[1-acyl-sn-glycero-3-phospho]-glycerol + octanoyl-CoA = 1'-[1-acyl-2-octanoyl-sn-glycero-3-phospho],3'-[1-acyl,2-hydroxy-sn-glycero-3-phospho]-glycerol + CoA. It catalyses the reaction 1'-[1,2-diacyl-sn-glycero-3-phospho],3'-[1-acyl-sn-glycero-3-phospho]-glycerol + hexadecanoyl-CoA = 1'-[1,2-diacyl-sn-glycero-3-phospho],3'-[1-acyl,2-hexadecanoyl-sn-glycero-3-phospho]-glycerol + CoA. The catalysed reaction is 1'-[1,2-diacyl-sn-glycero-3-phospho],3'-[1-acyl-sn-glycero-3-phospho]-glycerol + (5Z,8Z,11Z,14Z)-eicosatetraenoyl-CoA = 1'-[1,2-diacyl-sn-glycero-3-phospho],3'-[1-acyl,2-(5Z,8Z,11Z,14Z)-eicosatetraenoyl-sn-glycero-3-phospho]-glycerol + CoA. The enzyme catalyses 1',3'-bis-[1-acyl-sn-glycero-3-phospho]-glycerol + (5Z,8Z,11Z,14Z)-eicosatetraenoyl-CoA = 1'-[1-acyl-2-(5Z,8Z,11Z,14Z)-eicosatetraenoyl-sn-glycero-3-phospho],3'-[1-acyl,2-hydroxy-sn-glycero-3-phospho]-glycerol + CoA. It carries out the reaction a 1-acyl-sn-glycero-3-phospho-(1D-myo-inositol) + octadecanoyl-CoA = a 1-acyl-2-octadecanoyl-sn-glycero-3-phospho-(1D-myo-inositol) + CoA. It catalyses the reaction a 2-acyl-sn-glycero-3-phospho-D-myo-inositol + octadecanoyl-CoA = 1-octadecanoyl-2-acyl-sn-glycero-3-phospho-1D-myo-inositol + CoA. It participates in phospholipid metabolism; CDP-diacylglycerol biosynthesis; CDP-diacylglycerol from sn-glycerol 3-phosphate: step 2/3. Exhibits acyl-CoA:lysocardiolipin acyltransferase (ALCAT) activity; catalyzes the reacylation of lyso-cardiolipin to cardiolipin (CL), a key step in CL remodeling. Recognizes both monolysocardiolipin and dilysocardiolipin as substrates with a preference for linoleoyl-CoA and oleoyl-CoA as acyl donors. Also exhibits 1-acyl-sn-glycerol-3-phosphate acyltransferase activity (AGPAT) activity; converts 1-acyl-sn-glycerol-3- phosphate (lysophosphatidic acid or LPA) into 1,2-diacyl-sn-glycerol-3- phosphate (phosphatidic acid or PA) by incorporating an acyl moiety at the sn-2 position of the glycerol backbone. Possesses both lysophosphatidylinositol acyltransferase (LPIAT) and lysophosphatidylglycerol acyltransferase (LPGAT) activities. Required for establishment of the hematopoietic and endothelial lineages. This Danio rerio (Zebrafish) protein is Lysocardiolipin acyltransferase 1 (lclat1).